Here is a 356-residue protein sequence, read N- to C-terminus: Heat-inducible transcription repressor HrcA (356 aa).

The protein belongs to the HrcA family.

In terms of biological role, negative regulator of class I heat shock genes (grpE-dnaK-dnaJ and groELS operons). Prevents heat-shock induction of these operons. The sequence is that of Heat-inducible transcription repressor HrcA from Brucella abortus (strain S19).